The chain runs to 359 residues: tRNA N6-adenosine threonylcarbamoyltransferase (359 aa).

Fe cation is bound by residues H115 and H119. Substrate-binding positions include 137–141, D170, G183, and N283; that span reads LVSGG. A Fe cation-binding site is contributed by D311. Residues 328–359 form a disordered region; the sequence is APDSLDIAPRSRWPLDEKSAPVFGTGRRGAKA.

The protein belongs to the KAE1 / TsaD family. The cofactor is Fe(2+).

The protein resides in the cytoplasm. The catalysed reaction is L-threonylcarbamoyladenylate + adenosine(37) in tRNA = N(6)-L-threonylcarbamoyladenosine(37) in tRNA + AMP + H(+). Its function is as follows. Required for the formation of a threonylcarbamoyl group on adenosine at position 37 (t(6)A37) in tRNAs that read codons beginning with adenine. Is involved in the transfer of the threonylcarbamoyl moiety of threonylcarbamoyl-AMP (TC-AMP) to the N6 group of A37, together with TsaE and TsaB. TsaD likely plays a direct catalytic role in this reaction. The chain is tRNA N6-adenosine threonylcarbamoyltransferase from Brucella abortus (strain S19).